The primary structure comprises 160 residues: MHCPFCRHADTQVVDSRVSEDGATIRRRRRCPACDKRFTTYERVELALPSVVKKDGSRTEFDRRKIVASMQLALRKRPVAADAIDAAVARIEYLLLGSGEREVRSERLGELVMNELRALDTIAYVRFASVYRRFEDVSEFEDVIEEFRRASSPPKPSRKR.

The segment at 3–34 (CPFCRHADTQVVDSRVSEDGATIRRRRRCPAC) is a zinc-finger region. Positions 49 to 139 (PSVVKKDGSR…VYRRFEDVSE (91 aa)) constitute an ATP-cone domain.

The protein belongs to the NrdR family. It depends on Zn(2+) as a cofactor.

Its function is as follows. Negatively regulates transcription of bacterial ribonucleotide reductase nrd genes and operons by binding to NrdR-boxes. This is Transcriptional repressor NrdR from Paraburkholderia phytofirmans (strain DSM 17436 / LMG 22146 / PsJN) (Burkholderia phytofirmans).